We begin with the raw amino-acid sequence, 143 residues long: uncharacterized protein (143 aa).

An N-terminal signal peptide occupies residues 1-16 (MSRNRLFLVAGSLAVA). Residues 114 to 134 (GAYVFLGPGFTPGSPSGGSGG) traverse the membrane as a helical segment.

Its subcellular location is the membrane. This is an uncharacterized protein from Mycobacterium tuberculosis (strain CDC 1551 / Oshkosh).